Here is a 429-residue protein sequence, read N- to C-terminus: ATP-dependent RNA helicase RhlB (429 aa).

Residues 9–37 (DKFAQMGLEPEVLAGLESKGFHYCTPIQA) carry the Q motif motif. The Helicase ATP-binding domain occupies 40–219 (LPLLVEGHDL…YEHMNHPEHV (180 aa)). 53-60 (AQTGTGKT) serves as a coordination point for ATP. Positions 165–168 (DEAD) match the DEAD box motif. The 148-residue stretch at 243-390 (KMLLLLSLME…VSKYDREALL (148 aa)) folds into the Helicase C-terminal domain. Residues 399–429 (VFRNRQPVNRNMRDRQGGGNSNNRRRPPRKS) form a disordered region.

This sequence belongs to the DEAD box helicase family. RhlB subfamily. Component of the RNA degradosome, which is a multiprotein complex involved in RNA processing and mRNA degradation.

It is found in the cytoplasm. The catalysed reaction is ATP + H2O = ADP + phosphate + H(+). Functionally, DEAD-box RNA helicase involved in RNA degradation. Has RNA-dependent ATPase activity and unwinds double-stranded RNA. This chain is ATP-dependent RNA helicase RhlB, found in Aeromonas hydrophila subsp. hydrophila (strain ATCC 7966 / DSM 30187 / BCRC 13018 / CCUG 14551 / JCM 1027 / KCTC 2358 / NCIMB 9240 / NCTC 8049).